A 98-amino-acid polypeptide reads, in one-letter code: uncharacterized protein (98 aa).

A helical membrane pass occupies residues 10 to 30; the sequence is LYGFFAVTGVLIASFIIGEIV.

It is found in the host membrane. This is an uncharacterized protein from Saccharolobus islandicus (Sulfolobus islandicus).